A 549-amino-acid polypeptide reads, in one-letter code: Probable protein kinase UbiB (549 aa).

The Protein kinase domain maps to 123 to 501 (NFDDTPLASA…QQKAHKSNYL (379 aa)). ATP contacts are provided by residues 129–137 (LASASISQV) and K152. D287 acts as the Proton acceptor in catalysis. The next 2 membrane-spanning stretches (helical) occupy residues 498 to 518 (SNYL…LFSQ) and 520 to 540 (ATLW…LLGW).

The protein belongs to the ABC1 family. UbiB subfamily.

Its subcellular location is the cell inner membrane. It participates in cofactor biosynthesis; ubiquinone biosynthesis [regulation]. Functionally, is probably a protein kinase regulator of UbiI activity which is involved in aerobic coenzyme Q (ubiquinone) biosynthesis. The sequence is that of Probable protein kinase UbiB from Shewanella loihica (strain ATCC BAA-1088 / PV-4).